Consider the following 550-residue polypeptide: Glucose-6-phosphate isomerase (550 aa).

The active-site Proton donor is Glu-356. Residues His-387 and Lys-515 contribute to the active site.

This sequence belongs to the GPI family.

It is found in the cytoplasm. The enzyme catalyses alpha-D-glucose 6-phosphate = beta-D-fructose 6-phosphate. Its pathway is carbohydrate biosynthesis; gluconeogenesis. It functions in the pathway carbohydrate degradation; glycolysis; D-glyceraldehyde 3-phosphate and glycerone phosphate from D-glucose: step 2/4. Its function is as follows. Catalyzes the reversible isomerization of glucose-6-phosphate to fructose-6-phosphate. This Vibrio vulnificus (strain YJ016) protein is Glucose-6-phosphate isomerase.